A 295-amino-acid polypeptide reads, in one-letter code: Small ribosomal subunit biogenesis GTPase RsgA (295 aa).

Residues 68–228 enclose the CP-type G domain; the sequence is KNLLVKPHVA…VVDTPGFANL (161 aa). GTP is bound by residues 117–120 and 170–178; these read NKMD and GLSGVGKSS. C250, C255, H257, and C263 together coordinate Zn(2+).

The protein belongs to the TRAFAC class YlqF/YawG GTPase family. RsgA subfamily. As to quaternary structure, monomer. Associates with 30S ribosomal subunit, binds 16S rRNA. Zn(2+) serves as cofactor.

It localises to the cytoplasm. Its function is as follows. One of several proteins that assist in the late maturation steps of the functional core of the 30S ribosomal subunit. Helps release RbfA from mature subunits. May play a role in the assembly of ribosomal proteins into the subunit. Circularly permuted GTPase that catalyzes slow GTP hydrolysis, GTPase activity is stimulated by the 30S ribosomal subunit. The chain is Small ribosomal subunit biogenesis GTPase RsgA from Thermotoga neapolitana (strain ATCC 49049 / DSM 4359 / NBRC 107923 / NS-E).